The chain runs to 127 residues: uncharacterized protein (127 aa).

The chain crosses the membrane as a helical span at residues 84–103 (IALLSLFISLSIRITCFPFF).

Its subcellular location is the membrane. This is an uncharacterized protein from Saccharomyces cerevisiae (strain ATCC 204508 / S288c) (Baker's yeast).